Here is an 85-residue protein sequence, read N- to C-terminus: MAHKKAGGSSRNGRDSEAKRLGVKRFGGETVLAGSIIVRQRGTKFHAGTNVGLGTDHTLYAKATGKILFEVKGPLNRKYVSIVAE.

Residues 1-20 (MAHKKAGGSSRNGRDSEAKR) form a disordered region.

This sequence belongs to the bacterial ribosomal protein bL27 family.

This Aeromonas salmonicida (strain A449) protein is Large ribosomal subunit protein bL27.